Here is a 504-residue protein sequence, read N- to C-terminus: Arrestin-related trafficking adapter 10 (504 aa).

It belongs to the ART10 family.

It is found in the cytoplasm. May regulate endocytosis by recruiting RSP5 ubiquitin ligase activity to specific plasma membrane proteins in response to extracellular stimuli. The polypeptide is Arrestin-related trafficking adapter 10 (ART10) (Candida glabrata (strain ATCC 2001 / BCRC 20586 / JCM 3761 / NBRC 0622 / NRRL Y-65 / CBS 138) (Yeast)).